Reading from the N-terminus, the 1524-residue chain is DNA-directed RNA polymerase subunit beta' (1524 aa).

Residues Cys58, Cys60, Cys73, and Cys76 each coordinate Zn(2+). Mg(2+) contacts are provided by Asp739, Asp741, and Asp743. Residues Cys1112, Cys1194, Cys1201, and Cys1204 each contribute to the Zn(2+) site. The tract at residues 1502–1524 is disordered; the sequence is AVEAKEKEAPRRPVRREQPGKGL.

The protein belongs to the RNA polymerase beta' chain family. As to quaternary structure, the RNAP catalytic core consists of 2 alpha, 1 beta, 1 beta' and 1 omega subunit. When a sigma factor is associated with the core the holoenzyme is formed, which can initiate transcription. The cofactor is Mg(2+). Zn(2+) is required as a cofactor.

It carries out the reaction RNA(n) + a ribonucleoside 5'-triphosphate = RNA(n+1) + diphosphate. Functionally, DNA-dependent RNA polymerase catalyzes the transcription of DNA into RNA using the four ribonucleoside triphosphates as substrates. The polypeptide is DNA-directed RNA polymerase subunit beta' (Thermus aquaticus).